A 602-amino-acid polypeptide reads, in one-letter code: UvrABC system protein C (602 aa).

The GIY-YIG domain maps to 15–92; sequence DLPGSYQMKD…IQKYQPYYNI (78 aa). Residues 197–232 enclose the UVR domain; it reads GKAKASLTAKMERAAKNLQFERAAEIRDQLHYIEQT.

This sequence belongs to the UvrC family. As to quaternary structure, interacts with UvrB in an incision complex.

Its subcellular location is the cytoplasm. The UvrABC repair system catalyzes the recognition and processing of DNA lesions. UvrC both incises the 5' and 3' sides of the lesion. The N-terminal half is responsible for the 3' incision and the C-terminal half is responsible for the 5' incision. This Lacticaseibacillus paracasei (strain ATCC 334 / BCRC 17002 / CCUG 31169 / CIP 107868 / KCTC 3260 / NRRL B-441) (Lactobacillus paracasei) protein is UvrABC system protein C.